The sequence spans 570 residues: Formate--tetrahydrofolate ligase (570 aa).

65-72 (TPLGEGKT) provides a ligand contact to ATP.

Belongs to the formate--tetrahydrofolate ligase family.

It catalyses the reaction (6S)-5,6,7,8-tetrahydrofolate + formate + ATP = (6R)-10-formyltetrahydrofolate + ADP + phosphate. It participates in one-carbon metabolism; tetrahydrofolate interconversion. This chain is Formate--tetrahydrofolate ligase, found in Herpetosiphon aurantiacus (strain ATCC 23779 / DSM 785 / 114-95).